Reading from the N-terminus, the 126-residue chain is Putative esterase ComA2 (126 aa).

Belongs to the thioesterase PaaI family.

Is not required for competence. The protein is Putative esterase ComA2 (yuxO) of Bacillus subtilis (strain 168).